A 257-amino-acid polypeptide reads, in one-letter code: Pimeloyl-[acyl-carrier protein] methyl ester esterase (257 aa).

Residues 16–242 (LVLLHGWGLN…AAHAPFISHP (227 aa)) enclose the AB hydrolase-1 domain. Substrate-binding positions include tryptophan 22, 82–83 (SL), and 143–147 (FLGLQ). Serine 82 acts as the Nucleophile in catalysis. Residues aspartate 207 and histidine 235 contribute to the active site. Histidine 235 is a substrate binding site.

It belongs to the AB hydrolase superfamily. Carboxylesterase BioH family. In terms of assembly, monomer.

It localises to the cytoplasm. It catalyses the reaction 6-carboxyhexanoyl-[ACP] methyl ester + H2O = 6-carboxyhexanoyl-[ACP] + methanol + H(+). Its pathway is cofactor biosynthesis; biotin biosynthesis. Functionally, the physiological role of BioH is to remove the methyl group introduced by BioC when the pimeloyl moiety is complete. It allows to synthesize pimeloyl-ACP via the fatty acid synthetic pathway through the hydrolysis of the ester bonds of pimeloyl-ACP esters. This chain is Pimeloyl-[acyl-carrier protein] methyl ester esterase, found in Sodalis glossinidius (strain morsitans).